We begin with the raw amino-acid sequence, 1119 residues long: Agglutinin-like protein 3 (1119 aa).

The first 17 residues, 1 to 17 (MLQQYTLLLIYLSVATA), serve as a signal peptide directing secretion. Cystine bridges form between Cys-73-Cys-150, Cys-96-Cys-112, Cys-205-Cys-298, and Cys-227-Cys-256. ALS repeat units follow at residues 365 to 396 (TTIT…VDIP), 401 to 432 (TTVT…VQVP), and 438 to 469 (VTTT…IREP). N-linked (GlcNAc...) asparagine glycosylation is present at Asn-471. 2 ALS repeats span residues 474 to 505 (VTTT…IKEP) and 510 to 541 (VTTT…IKEP). An N-linked (GlcNAc...) asparagine glycan is attached at Asn-543. The stretch at 546–577 (VTTTEYWSQSYTTTTTVTAPPGGTDTVLVREP) is one ALS 6 repeat. An N-linked (GlcNAc...) asparagine glycan is attached at Asn-579. 2 ALS repeats span residues 582 to 613 (VTTT…IREP) and 618 to 649 (VTTT…IREP). Asn-651 is a glycosylation site (N-linked (GlcNAc...) asparagine). An ALS 9 repeat occupies 654–685 (VTTTEYWSQSYATTTTITAPPGETDTVLIREP). Residue Asn-687 is glycosylated (N-linked (GlcNAc...) asparagine). The stretch at 690-721 (VTTTEYWSQSFATTTTVTAPPGGTDTVIIREP) is one ALS 10 repeat. Residue Asn-723 is glycosylated (N-linked (GlcNAc...) asparagine). One copy of the ALS 11 repeat lies at 726–757 (VTTTEYWSQSYATTTTITAPPGETDTVLIREP). An N-linked (GlcNAc...) asparagine glycan is attached at Asn-759. ALS repeat units lie at residues 762–793 (VTTT…IREP) and 798–827 (VTTT…VIIY). A glycan (N-linked (GlcNAc...) asparagine) is linked at Asn-845. Residues 892–1077 (MVTNTVDSTT…QYNSDTQQTT (186 aa)) are disordered. Low complexity predominate over residues 894-929 (TNTVDSTTTESTSQSPSGIFSESGVSVETESSTVTT). 2 stretches are compositionally biased toward polar residues: residues 930 to 941 (AQTNPSVPTTES) and 947 to 965 (TKGN…NVKS). Positions 974-983 (TTSTAASTST) are enriched in low complexity. A glycan (N-linked (GlcNAc...) asparagine) is linked at Asn-987. 2 stretches are compositionally biased toward low complexity: residues 998–1022 (ASSP…STSV) and 1035–1048 (APSA…TTTA). Residues Asn-1050 and Asn-1061 are each glycosylated (N-linked (GlcNAc...) asparagine). The segment covering 1057 to 1077 (TTSTNQSQSQSQYNSDTQQTT) has biased composition (low complexity). Residue Ser-1098 is the site of GPI-anchor amidated serine attachment. The propeptide at 1099–1119 (GSVIQHSTWLCGLITLLSLFI) is removed in mature form.

This sequence belongs to the ALS family. In terms of processing, the GPI-anchor is attached to the protein in the endoplasmic reticulum and serves to target the protein to the cell surface. There, the glucosamine-inositol phospholipid moiety is cleaved off and the GPI-modified mannoprotein is covalently attached via its lipidless GPI glycan remnant to the 1,6-beta-glucan of the outer cell wall layer.

The protein localises to the cell membrane. It localises to the secreted. It is found in the cell wall. In terms of biological role, cell surface adhesion protein which mediates both yeast-to-host tissue adherence and yeast aggregation. Plays an important role in the biofilm formation and pathogenesis of C.albicans infections. Necessary for C.albicans to bind to N-cadherin on endothelial cells and E-cadherin on oral epithelial cells and subsequent endocytosis by these cells. During disseminated infection, mediates initial trafficking to the brain and renal cortex and contributes to fungal persistence in the kidneys. This chain is Agglutinin-like protein 3 (ALS3), found in Candida albicans (Yeast).